The chain runs to 245 residues: UDP-N-acetyl-D-mannosaminuronic acid transferase (245 aa).

This sequence belongs to the glycosyltransferase 26 family.

It catalyses the reaction UDP-N-acetyl-alpha-D-mannosaminouronate + N-acetyl-alpha-D-glucosaminyl-di-trans,octa-cis-undecaprenyl diphosphate = beta-D-ManNAcA-(1-&gt;4)-alpha-D-GlcNAc-di-trans,octa-cis-undecaprenyl diphosphate + UDP + H(+). The protein operates within bacterial outer membrane biogenesis; enterobacterial common antigen biosynthesis. Catalyzes the synthesis of Und-PP-GlcNAc-ManNAcA (Lipid II), the second lipid-linked intermediate involved in enterobacterial common antigen (ECA) synthesis. In Proteus mirabilis (strain HI4320), this protein is UDP-N-acetyl-D-mannosaminuronic acid transferase.